The primary structure comprises 182 residues: CDP-diacylglycerol--glycerol-3-phosphate 3-phosphatidyltransferase (182 aa).

The Cytoplasmic segment spans residues 1 to 12 (MQLNIPTWLTLF). Residues 13 to 37 (RVVLIPFFVLAFYLPFVWAPMVCAI) form a helical membrane-spanning segment. Residues 38–60 (IFVFAAATDWFDGFLARRWKQTT) are Periplasmic-facing. A helical membrane pass occupies residues 61–81 (RFGAFLDPVADKVMVAVALVL). Over 82 to 86 (VAEHY) the chain is Cytoplasmic. Residues 87–107 (HSWWITLPAATMIAREIIISS) traverse the membrane as a helical segment. Topologically, residues 108 to 145 (LREWMAEIGKRSSVAVSWVGKVKTMAQMGSLVGLLWRP) are periplasmic. A helical transmembrane segment spans residues 146-168 (DHNVELASFVLLYIAAVLTFWSM). Topologically, residues 169–181 (FQYLNAAWSDLLE) are cytoplasmic.

This sequence belongs to the CDP-alcohol phosphatidyltransferase class-I family.

The protein resides in the cell inner membrane. It catalyses the reaction a CDP-1,2-diacyl-sn-glycerol + sn-glycerol 3-phosphate = a 1,2-diacyl-sn-glycero-3-phospho-(1'-sn-glycero-3'-phosphate) + CMP + H(+). The protein operates within phospholipid metabolism; phosphatidylglycerol biosynthesis; phosphatidylglycerol from CDP-diacylglycerol: step 1/2. In terms of biological role, catalyzes the conversion of cytidine diphosphate diacylglycerol (CDP-DG) and glycerol 3-phosphate into phosphatidylglycerol. Essential for the synthesis of anionic phospholipids, thereby playing a role in balancing the ratio of zwitterionic and anionic phospholipids, which is thought to be important for normal membrane function. The sequence is that of CDP-diacylglycerol--glycerol-3-phosphate 3-phosphatidyltransferase from Yersinia pestis bv. Antiqua (strain Antiqua).